The following is a 116-amino-acid chain: Ribonuclease P protein component 2 (116 aa).

This sequence belongs to the eukaryotic/archaeal RNase P protein component 2 family. In terms of assembly, consists of a catalytic RNA component and at least 4-5 protein subunits.

Its subcellular location is the cytoplasm. It catalyses the reaction Endonucleolytic cleavage of RNA, removing 5'-extranucleotides from tRNA precursor.. Its function is as follows. Part of ribonuclease P, a protein complex that generates mature tRNA molecules by cleaving their 5'-ends. The protein is Ribonuclease P protein component 2 of Methanosarcina mazei (strain ATCC BAA-159 / DSM 3647 / Goe1 / Go1 / JCM 11833 / OCM 88) (Methanosarcina frisia).